The sequence spans 144 residues: MRLNTLSPAAGSKPSKKRVGRGIGSGLGKTGGRGHKGQKSRSGGKVRAGFEGGQMPLKQRLPKFGFTSRKSLVTAEVRLSELAKVEGNVIDLNSLKAANVITKNIEFAKVVLSGEIATAVTVKGLRVTKGAKAAIEAAGGKIEE.

The interval 1-52 (MRLNTLSPAAGSKPSKKRVGRGIGSGLGKTGGRGHKGQKSRSGGKVRAGFEG) is disordered. Positions 21–31 (RGIGSGLGKTG) are enriched in gly residues. A compositionally biased stretch (basic residues) spans 32 to 44 (GRGHKGQKSRSGG).

Belongs to the universal ribosomal protein uL15 family. As to quaternary structure, part of the 50S ribosomal subunit.

In terms of biological role, binds to the 23S rRNA. The sequence is that of Large ribosomal subunit protein uL15 from Aliivibrio fischeri (strain ATCC 700601 / ES114) (Vibrio fischeri).